We begin with the raw amino-acid sequence, 393 residues long: 5-amino-6-(D-ribitylamino)uracil--L-tyrosine 4-hydroxyphenyl transferase (393 aa).

The 256-residue stretch at 67 to 322 folds into the Radical SAM core domain; the sequence is VTYVINRNIN…GQWIVNHQPS (256 aa). Positions 81, 85, and 88 each coordinate [4Fe-4S] cluster.

Belongs to the radical SAM superfamily. CofH family. In terms of assembly, consists of two subunits, CofG and CofH. [4Fe-4S] cluster serves as cofactor.

It catalyses the reaction 5-amino-6-(D-ribitylamino)uracil + L-tyrosine + S-adenosyl-L-methionine = 5-amino-5-(4-hydroxybenzyl)-6-(D-ribitylimino)-5,6-dihydrouracil + 2-iminoacetate + 5'-deoxyadenosine + L-methionine + H(+). The protein operates within cofactor biosynthesis; coenzyme F0 biosynthesis. Its function is as follows. Catalyzes the radical-mediated synthesis of 5-amino-5-(4-hydroxybenzyl)-6-(D-ribitylimino)-5,6-dihydrouracil from 5-amino-6-(D-ribitylamino)uracil and L-tyrosine. The chain is 5-amino-6-(D-ribitylamino)uracil--L-tyrosine 4-hydroxyphenyl transferase from Thermosynechococcus vestitus (strain NIES-2133 / IAM M-273 / BP-1).